A 169-amino-acid polypeptide reads, in one-letter code: Lutropin/choriogonadotropin subunit beta (169 aa).

An N-terminal signal peptide occupies residues 1–20 (MEMLQGLLLWMLLSVGGVWA). 6 disulfide bridges follow: Cys29-Cys77, Cys43-Cys92, Cys46-Cys130, Cys54-Cys108, Cys58-Cys110, and Cys113-Cys120. Asn33 is a glycosylation site (N-linked (GlcNAc...) asparagine). Residues 131-169 (APQTSSSCKDPPSQPLTSTSTPTPGASRRSSHPLPINTS) are disordered. A compositionally biased stretch (low complexity) spans 145-158 (PLTSTSTPTPGASR).

Belongs to the glycoprotein hormones subunit beta family. As to quaternary structure, heterodimer of a common alpha chain and a unique beta chain which confers biological specificity to thyrotropin, lutropin, follitropin and gonadotropin.

The protein localises to the secreted. Its function is as follows. Promotes spermatogenesis and ovulation by stimulating the testes and ovaries to synthesize steroids. This is Lutropin/choriogonadotropin subunit beta (LHB) from Equus asinus (Donkey).